Consider the following 432-residue polypeptide: METAIEWITAHEILDSRGQPTLEALVGLANGATGLAQVPSGASTGTFEAHELRDGDPKRYGGKGVLRAVENILGPIQSELRGEDALNQARIDQLLIDLDGTPNKSQLGANAILAVSLATAKAAASAVGLPLYRYLGGPFANLLPAPLMNVLNGGAHADNNLDIQEFMIVPIGAPSFREALRYGAEVFAALKQVLRQRGLSTGVGDEGGFAPNLDSNAAALDLLMTAIEQAGYRPGEDIALALDVAANELLQDGQYHFEGKARSAEQMVNYYEQLLANYPILSLEDGLAEEDWAGWQAMTARLGSRVQLVGDDLFVTNPARLQKGIDSGAANAILIKLNQIGTLTETVSTIQLAVQAGFRTLISHRSGETEDTTIADLAVATRAGQIKTGSLCRSERIAKYNQLLRIEDELGEAAVYAGRVGLGPRGLPARSR.

Residue Q164 participates in (2R)-2-phosphoglycerate binding. The active-site Proton donor is E206. 3 residues coordinate Mg(2+): D243, E284, and D311. Residues K336, R365, S366, and K387 each contribute to the (2R)-2-phosphoglycerate site. Catalysis depends on K336, which acts as the Proton acceptor.

This sequence belongs to the enolase family. It depends on Mg(2+) as a cofactor.

It is found in the cytoplasm. The protein resides in the secreted. Its subcellular location is the cell surface. The catalysed reaction is (2R)-2-phosphoglycerate = phosphoenolpyruvate + H2O. It participates in carbohydrate degradation; glycolysis; pyruvate from D-glyceraldehyde 3-phosphate: step 4/5. Its function is as follows. Catalyzes the reversible conversion of 2-phosphoglycerate (2-PG) into phosphoenolpyruvate (PEP). It is essential for the degradation of carbohydrates via glycolysis. The polypeptide is Enolase (Synechococcus sp. (strain JA-3-3Ab) (Cyanobacteria bacterium Yellowstone A-Prime)).